The primary structure comprises 506 residues: Sucrose transport protein SUT3 (506 aa).

The Cytoplasmic segment spans residues 1–20; the sequence is MAVDMELDGGGDGKGKAPPQ. Residues 21 to 41 traverse the membrane as a helical segment; that stretch reads ISLSGLFLACMVAGGVQYGWA. At 42 to 54 the chain is on the extracellular side; the sequence is LQLSLLTPYVQTL. Residues 55-75 traverse the membrane as a helical segment; sequence GIPHALTSVMWLCGPIAGLIV. Residues 76-94 are Cytoplasmic-facing; it reads QPCVGLYSDKCTSSLGRRR. Residues 95–115 form a helical membrane-spanning segment; sequence PFILTGCIIICISVIVIGFSS. The Extracellular segment spans residues 116–135; the sequence is DIGYALGDTTEDCKVYRGPR. A helical membrane pass occupies residues 136–156; the sequence is YHAAAAFILGFWLLDFSNNTV. The Cytoplasmic portion of the chain corresponds to 157–171; the sequence is QGPARALMADLSGRH. The helical transmembrane segment at 172 to 192 threads the bilayer; sequence GPSAANAIFCSWMALGNILGY. The Extracellular portion of the chain corresponds to 193 to 220; it reads SSGSTNDWHKWFPFLMTRACCEACANLK. The helical transmembrane segment at 221 to 241 threads the bilayer; that stretch reads AAFLVAVVFLGLSTAVTMVFA. Residues 242 to 275 lie on the Cytoplasmic side of the membrane; sequence REVALDPVAAAKRNEGEASGLLAVFKGMKNLPVG. Residues 276 to 296 traverse the membrane as a helical segment; it reads MPSVLIVTGLTWLSWFPFILF. The Extracellular portion of the chain corresponds to 297–327; that stretch reads DTDWMGREIYHGRPDGSPAEVTAFQEGVRQG. The chain crosses the membrane as a helical span at residues 328–348; sequence AFGLLLNSIVLGISSFLIEPM. At 349–355 the chain is on the cytoplasmic side; it reads CRRLGAR. A helical membrane pass occupies residues 356 to 376; the sequence is AVWVMSSAVVCVAMAAVSVLS. The Extracellular segment spans residues 377–404; it reads AWSLGDFGGSVQDAARAPAEEGGVRASA. A helical transmembrane segment spans residues 405–425; it reads LALFVFLGLPFAVLCSVPFAV. The Cytoplasmic portion of the chain corresponds to 426 to 441; the sequence is TAQLAASRGGGQGLCT. The helical transmembrane segment at 442–462 threads the bilayer; the sequence is GVLNISIVVPQMAIALGAGPW. Residues 463 to 470 are Extracellular-facing; the sequence is DELFGEGN. A helical transmembrane segment spans residues 471–491; sequence IPAFAMASVFAAAAAAAGVVL. Topologically, residues 492 to 506 are cytoplasmic; sequence LPKVSVRSVSMAGGH.

This sequence belongs to the glycoside-pentoside-hexuronide (GPH) cation symporter transporter (TC 2.A.2.4) family. As to quaternary structure, homodimer. As to expression, widely expressed. Highest expression in sink leaves and lowest in germinating seeds.

The protein resides in the cell membrane. The protein operates within glycan biosynthesis; sucrose metabolism. Functionally, responsible for the transport of sucrose into the cell, with the concomitant uptake of protons (symport system). May also transport other glucosides. This Oryza sativa subsp. japonica (Rice) protein is Sucrose transport protein SUT3 (SUT3).